The primary structure comprises 657 residues: Translation factor GUF1, mitochondrial (657 aa).

The N-terminal 39 residues, 1–39, are a transit peptide targeting the mitochondrion; the sequence is MRGCLQSVKWLTSAVRQSQSLTSSTRFPRRLFNTSTLHY. One can recognise a tr-type G domain in the interval 59–239; sequence ERFRNFCIVA…TVIEQVPAPV (181 aa). Residues 68-75, 132-136, and 186-189 contribute to the GTP site; these read AHVDHGKS, DTPGH, and NKVD.

It belongs to the TRAFAC class translation factor GTPase superfamily. Classic translation factor GTPase family. LepA subfamily.

Its subcellular location is the mitochondrion inner membrane. It carries out the reaction GTP + H2O = GDP + phosphate + H(+). Promotes mitochondrial protein synthesis. May act as a fidelity factor of the translation reaction, by catalyzing a one-codon backward translocation of tRNAs on improperly translocated ribosomes. Binds to mitochondrial ribosomes in a GTP-dependent manner. The chain is Translation factor GUF1, mitochondrial from Blastomyces gilchristii (strain SLH14081) (Blastomyces dermatitidis).